The chain runs to 430 residues: Serine--tRNA ligase (430 aa).

231–233 contributes to the L-serine binding site; sequence TSE. Position 262–264 (262–264) interacts with ATP; that stretch reads RSE. An L-serine-binding site is contributed by Glu-285. 349 to 352 is an ATP binding site; it reads EISS. Residue Ser-385 coordinates L-serine.

Belongs to the class-II aminoacyl-tRNA synthetase family. Type-1 seryl-tRNA synthetase subfamily. Homodimer. The tRNA molecule binds across the dimer.

The protein localises to the cytoplasm. It carries out the reaction tRNA(Ser) + L-serine + ATP = L-seryl-tRNA(Ser) + AMP + diphosphate + H(+). The enzyme catalyses tRNA(Sec) + L-serine + ATP = L-seryl-tRNA(Sec) + AMP + diphosphate + H(+). It participates in aminoacyl-tRNA biosynthesis; selenocysteinyl-tRNA(Sec) biosynthesis; L-seryl-tRNA(Sec) from L-serine and tRNA(Sec): step 1/1. Its function is as follows. Catalyzes the attachment of serine to tRNA(Ser). Is also able to aminoacylate tRNA(Sec) with serine, to form the misacylated tRNA L-seryl-tRNA(Sec), which will be further converted into selenocysteinyl-tRNA(Sec). This Roseobacter denitrificans (strain ATCC 33942 / OCh 114) (Erythrobacter sp. (strain OCh 114)) protein is Serine--tRNA ligase.